Reading from the N-terminus, the 1130-residue chain is Sodium/potassium/calcium exchanger 1 (1130 aa).

Over 1–419 the chain is Extracellular; the sequence is MGKLIRMGTQ…DLFSVEDRRQ (419 aa). Residues 104 to 209 are disordered; sequence PSIAMEDTPN…SPTATVRDRE (106 aa). The segment covering 125–136 has biased composition (polar residues); sequence LKNSYSPTTAGT. Residues 170–187 show a composition bias toward basic and acidic residues; the sequence is PRGERKNSSPTHAREKGR. Asparagine 176 and asparagine 273 each carry an N-linked (GlcNAc...) asparagine glycan. The tract at residues 274-295 is disordered; that stretch reads ISTTPQGAVPQHTPATSEEQMT. Positions 286-295 are enriched in polar residues; the sequence is TPATSEEQMT. Residues 420 to 440 traverse the membrane as a helical segment; it reads GWVVLHIFGMMYVFVALAIVC. The Cytoplasmic portion of the chain corresponds to 441 to 464; the sequence is DEYFVPALGVITHKLQISEDVAGA. An Alpha-1 repeat occupies 461–501; the sequence is VAGATFMAAGGSAPELFTSLIGVFISHSNVGIGTIVGSAVF. A helical membrane pass occupies residues 465 to 485; that stretch reads TFMAAGGSAPELFTSLIGVFI. The Extracellular segment spans residues 486–489; that stretch reads SHSN. A helical membrane pass occupies residues 490–510; that stretch reads VGIGTIVGSAVFNILFVIGTC. The Cytoplasmic portion of the chain corresponds to 511 to 530; sequence ALFSREILNLTWWPLFRDVS. The helical transmembrane segment at 531 to 551 threads the bilayer; that stretch reads FYILDLSMLIVFFLDSFIAWW. Glutamate 552 is a topological domain (extracellular). A helical membrane pass occupies residues 553-573; that stretch reads SLLLLLAYALYVFTMKWNKQI. Residues 574-938 are Cytoplasmic-facing; it reads ELWVKEQLSR…SLEWPDSRQK (365 aa). Residues 598–619 are disordered; sequence PSEDAVEENEQQDSKKLKLPSV. Serine 625 carries the phosphoserine modification. The segment at 650–932 is disordered; that stretch reads GEARPSKDKQ…ENEEPLSLEW (283 aa). Positions 661–675 are enriched in polar residues; that stretch reads SLNQEARVLSQTKAE. Threonine 690 carries the post-translational modification Phosphothreonine. Residues 703 to 715 show a composition bias toward acidic residues; sequence QEDDPGCQEDVDE. Over residues 730–751 the composition is skewed to basic and acidic residues; that stretch reads ETETEGKKDEQEGETEAERKED. Composition is skewed to acidic residues over residues 766–782 and 802–820; these read GETE…GETE and QEGE…GETE. Residues 833-855 are compositionally biased toward basic and acidic residues; the sequence is AESKEVEQERETEAEGKDKHEGQ. Acidic residues-rich tracts occupy residues 870–880 and 896–928; these read GETEANAEDQC and DGGD…EEPL. Residues 939-959 form a helical membrane-spanning segment; sequence QAIYLFLLPIVFPLWLTIPDV. The Extracellular portion of the chain corresponds to 960–966; the sequence is RRQESRK. A helical membrane pass occupies residues 967–987; it reads FFVITFLGSIIWIAMFSYLMV. Residues 988-1002 lie on the Cytoplasmic side of the membrane; that stretch reads WWAHQVGETIGISEE. A helical transmembrane segment spans residues 1003-1023; that stretch reads IMGLTILAAGTSIPDLITSVI. One copy of the Alpha-2 repeat lies at 1010–1041; the sequence is AAGTSIPDLITSVIVARKGLGDMAVSSSVGSN. Residues 1024–1041 lie on the Extracellular side of the membrane; that stretch reads VARKGLGDMAVSSSVGSN. The chain crosses the membrane as a helical span at residues 1042-1062; that stretch reads IFDITVGLPVPWLLFSLINAL. The Cytoplasmic portion of the chain corresponds to 1063–1070; the sequence is QPVPVSSN. The chain crosses the membrane as a helical span at residues 1071-1091; that stretch reads GLFCAIVLLFLMLLFVIFSIA. The Extracellular portion of the chain corresponds to 1092–1099; the sequence is SCKWRMNK. A helical membrane pass occupies residues 1100–1120; sequence ILGFTMFLLYFVFLVISVMLE. Residues 1121–1130 are Cytoplasmic-facing; the sequence is DRIISCPVSV.

This sequence belongs to the Ca(2+):cation antiporter (CaCA) (TC 2.A.19) family. SLC24A subfamily. Post-translationally, the uncleaved signal sequence is required for efficient membrane targeting and proper membrane integration and topology.

It localises to the cell membrane. It catalyses the reaction Ca(2+)(out) + K(+)(out) + 4 Na(+)(in) = Ca(2+)(in) + K(+)(in) + 4 Na(+)(out). Functionally, calcium, potassium:sodium antiporter that transports 1 Ca(2+) and 1 K(+) in exchange for 4 Na(+). Critical component of the visual transduction cascade, controlling the calcium concentration of outer segments during light and darkness. Light causes a rapid lowering of cytosolic free calcium in the outer segment of both retinal rod and cone photoreceptors and the light-induced lowering of calcium is caused by extrusion via this protein which plays a key role in the process of light adaptation. The sequence is that of Sodium/potassium/calcium exchanger 1 from Mus musculus (Mouse).